We begin with the raw amino-acid sequence, 145 residues long: Large-conductance mechanosensitive channel (145 aa).

2 helical membrane-spanning segments follow: residues 14–34 and 83–103; these read VIDL…VNSL and GAFL…FLLV.

Belongs to the MscL family. Homopentamer.

It localises to the cell inner membrane. Its function is as follows. Channel that opens in response to stretch forces in the membrane lipid bilayer. May participate in the regulation of osmotic pressure changes within the cell. The polypeptide is Large-conductance mechanosensitive channel (Paracoccus denitrificans (strain Pd 1222)).